The primary structure comprises 233 residues: Protein Mis18-alpha (233 aa).

Phosphoserine is present on residues S36, S39, and S40. Positions 80–178 (PLVFLCSGCR…NVEAVESYVL (99 aa)) constitute a Mis18 domain. The Zn(2+) site is built by C85, C88, C141, and C144. K162 participates in a covalent cross-link: Glycyl lysine isopeptide (Lys-Gly) (interchain with G-Cter in SUMO2). S233 bears the Phosphoserine mark.

The protein belongs to the mis18 family. In terms of assembly, homodimer, and heterodimer with OIP5/MIS18B. Identified in a complex containing MIS18A, OIP5/MIS18B, MIS18BP1, RBBP7 and RBBP4.

The protein resides in the nucleus. The protein localises to the chromosome. It localises to the centromere. Its function is as follows. Required for recruitment of CENPA to centromeres and normal chromosome segregation during mitosis. The sequence is that of Protein Mis18-alpha (MIS18A) from Plecturocebus moloch (Dusky titi monkey).